Here is a 156-residue protein sequence, read N- to C-terminus: Small ribosomal subunit protein uS7 (156 aa).

Belongs to the universal ribosomal protein uS7 family. Part of the 30S ribosomal subunit. Contacts proteins S9 and S11.

One of the primary rRNA binding proteins, it binds directly to 16S rRNA where it nucleates assembly of the head domain of the 30S subunit. Is located at the subunit interface close to the decoding center, probably blocks exit of the E-site tRNA. The polypeptide is Small ribosomal subunit protein uS7 (Bradyrhizobium sp. (strain BTAi1 / ATCC BAA-1182)).